Reading from the N-terminus, the 177-residue chain is Ribosome maturation factor RimM (177 aa).

One can recognise a PRC barrel domain in the interval 101–174 (EGEFHLLDLV…WLLLTPPPGL (74 aa)).

This sequence belongs to the RimM family. In terms of assembly, binds ribosomal protein uS19.

It is found in the cytoplasm. Its function is as follows. An accessory protein needed during the final step in the assembly of 30S ribosomal subunit, possibly for assembly of the head region. Essential for efficient processing of 16S rRNA. May be needed both before and after RbfA during the maturation of 16S rRNA. It has affinity for free ribosomal 30S subunits but not for 70S ribosomes. The chain is Ribosome maturation factor RimM from Synechococcus sp. (strain CC9605).